The chain runs to 324 residues: ATP-dependent 6-phosphofructokinase (324 aa).

Residue Gly-15 coordinates ATP. Position 25-29 (25-29 (RGVVR)) interacts with ADP. ATP is bound by residues 76 to 77 (RF) and 106 to 109 (GDGS). Asp-107 serves as a coordination point for Mg(2+). Residue 130 to 132 (TID) coordinates substrate. The active-site Proton acceptor is Asp-132. Residue Arg-159 participates in ADP binding. Residues Arg-167 and 174–176 (MGR) each bind substrate. ADP-binding positions include 190 to 192 (GCE), Lys-216, and 218 to 220 (KRH). Residues Glu-227, Arg-248, and 254–257 (HIQR) contribute to the substrate site.

The protein belongs to the phosphofructokinase type A (PFKA) family. ATP-dependent PFK group I subfamily. Prokaryotic clade 'B1' sub-subfamily. As to quaternary structure, homotetramer. Mg(2+) is required as a cofactor.

The protein resides in the cytoplasm. The catalysed reaction is beta-D-fructose 6-phosphate + ATP = beta-D-fructose 1,6-bisphosphate + ADP + H(+). It participates in carbohydrate degradation; glycolysis; D-glyceraldehyde 3-phosphate and glycerone phosphate from D-glucose: step 3/4. Its activity is regulated as follows. Allosterically activated by ADP and other diphosphonucleosides, and allosterically inhibited by phosphoenolpyruvate. Functionally, catalyzes the phosphorylation of D-fructose 6-phosphate to fructose 1,6-bisphosphate by ATP, the first committing step of glycolysis. This is ATP-dependent 6-phosphofructokinase from Actinobacillus pleuropneumoniae serotype 5b (strain L20).